Here is a 538-residue protein sequence, read N- to C-terminus: Atos homolog protein B (538 aa).

Polar residues-rich tracts occupy residues 1 to 12 (MRHVQAETSPSS) and 129 to 141 (GGSSTSPWTSGAR). 3 disordered regions span residues 1-98 (MRHV…EPPT), 129-185 (GGSS…QLHT), and 201-303 (LVSG…PTDC). A compositionally biased stretch (pro residues) spans 227–238 (HTPPGPGPPGPC). Phosphoserine is present on residues Ser-254 and Ser-255. The segment at 348–430 (LLGNFEESLL…VPKVGTIQVT (83 aa)) is required for macropage invasion. The tract at residues 436 to 444 (QTVVKMFLV) is transactivation domain 1 (TAD1).

The protein belongs to the ATOS family.

The protein resides in the nucleus. Its function is as follows. Transcription regulator that may syncronize transcriptional and translational programs. This Bos taurus (Bovine) protein is Atos homolog protein B.